Consider the following 26-residue polypeptide: uncharacterized protein (26 aa).

The protein resides in the plastid. Its subcellular location is the chloroplast. This is an uncharacterized protein from Trieres chinensis (Marine centric diatom).